A 3364-amino-acid chain; its full sequence is Salivary gland surface protein 1 (3364 aa).

Beta-propeller regions lie at residues M1–A344 and F705–L1216. N-linked (GlcNAc...) asparagine glycosylation is present at N59. 2 disulfide bridges follow: C251-C297 and C1128-C1139. Residues V345–Q2733 are rhs/YD-repeats. N-linked (GlcNAc...) asparagine glycosylation occurs at N1149. The tract at residues N1345 to P1494 is carbohydrate-binding module (CBM). Residues H1575–E1715 form a lectin carbohydrate-recognition domain (lectin-CRD) region. The segment at H2225–P2304 is wedge domain. Intrachain disulfides connect C2253–C2285 and C2407–C2421. The next 5 membrane-spanning stretches (helical) occupy residues I2734–A2754, I2774–F2794, M2805–A2825, W2844–I2864, and M2878–M2898. The tox-SGS stretch occupies residues Y3126–N3216.

Post-translationally, probably cleaved at the C-terminus. As to expression, female saliva (at protein level). Female salivary gland (at protein level). Not detected in female carcass without salivary glands. Not detected in male tissues.

It localises to the cell membrane. It is found in the secreted. Functionally, (Microbial infection) Facilitates, but is not essential for, invasion of salivary glands by Plasmodium gallinaceum. Plays a role in Plasmodium gallinaceum oocyst development in mosquito midgut. Its function is as follows. (Microbial infection) Probably facilitates Zika virus replication in salivary glands. The polypeptide is Salivary gland surface protein 1 (Aedes aegypti (Yellowfever mosquito)).